The chain runs to 178 residues: Translation initiation factor IF-3 (178 aa).

Belongs to the IF-3 family. As to quaternary structure, monomer.

Its subcellular location is the cytoplasm. Functionally, IF-3 binds to the 30S ribosomal subunit and shifts the equilibrium between 70S ribosomes and their 50S and 30S subunits in favor of the free subunits, thus enhancing the availability of 30S subunits on which protein synthesis initiation begins. In Picosynechococcus sp. (strain ATCC 27264 / PCC 7002 / PR-6) (Agmenellum quadruplicatum), this protein is Translation initiation factor IF-3.